The following is a 311-amino-acid chain: tRNA-cytidine(32) 2-sulfurtransferase (311 aa).

Positions 47–52 (SGGKDS) match the PP-loop motif motif. [4Fe-4S] cluster-binding residues include C122, C125, and C213.

Belongs to the TtcA family. In terms of assembly, homodimer. Mg(2+) serves as cofactor. The cofactor is [4Fe-4S] cluster.

The protein resides in the cytoplasm. It catalyses the reaction cytidine(32) in tRNA + S-sulfanyl-L-cysteinyl-[cysteine desulfurase] + AH2 + ATP = 2-thiocytidine(32) in tRNA + L-cysteinyl-[cysteine desulfurase] + A + AMP + diphosphate + H(+). Its pathway is tRNA modification. Functionally, catalyzes the ATP-dependent 2-thiolation of cytidine in position 32 of tRNA, to form 2-thiocytidine (s(2)C32). The sulfur atoms are provided by the cysteine/cysteine desulfurase (IscS) system. The chain is tRNA-cytidine(32) 2-sulfurtransferase from Escherichia coli O157:H7.